A 200-amino-acid chain; its full sequence is Dipicolinate synthase subunit B (200 aa).

As to quaternary structure, dipicolinate synthase likely consists of DpaA and DpaB, since both proteins are required for DPA synthesis.

The enzyme catalyses (S)-2,3-dihydrodipicolinate + NADP(+) = dipicolinate + NADPH + H(+). Together with DpaA, catalyzes the conversion of dihydrodipicolinate to dipicolinate (DPA), which constitutes up to 10% of the dry weight of the spore. This chain is Dipicolinate synthase subunit B (dpaB), found in Bacillus subtilis (strain 168).